The chain runs to 361 residues: tRNA-specific 2-thiouridylase MnmA (361 aa).

ATP is bound by residues 9–16 (GMSGGVDS) and Met-35. Residues 95–97 (NPD) form an interaction with target base in tRNA region. Cys-100 acts as the Nucleophile in catalysis. Cysteines 100 and 196 form a disulfide. Gly-124 contributes to the ATP binding site. Residues 146–148 (KDQ) are interaction with tRNA. Catalysis depends on Cys-196, which acts as the Cysteine persulfide intermediate. The interaction with tRNA stretch occupies residues 308–309 (RY).

The protein belongs to the MnmA/TRMU family.

The protein resides in the cytoplasm. It catalyses the reaction S-sulfanyl-L-cysteinyl-[protein] + uridine(34) in tRNA + AH2 + ATP = 2-thiouridine(34) in tRNA + L-cysteinyl-[protein] + A + AMP + diphosphate + H(+). Its function is as follows. Catalyzes the 2-thiolation of uridine at the wobble position (U34) of tRNA, leading to the formation of s(2)U34. The chain is tRNA-specific 2-thiouridylase MnmA from Nitrosomonas eutropha (strain DSM 101675 / C91 / Nm57).